We begin with the raw amino-acid sequence, 556 residues long: DNA ligase (556 aa).

An ATP-binding site is contributed by Glu245. Catalysis depends on Lys247, which acts as the N6-AMP-lysine intermediate. 6 residues coordinate ATP: Arg252, Arg267, Glu296, Phe336, Arg408, and Lys414.

The protein belongs to the ATP-dependent DNA ligase family. Mg(2+) serves as cofactor.

The enzyme catalyses ATP + (deoxyribonucleotide)n-3'-hydroxyl + 5'-phospho-(deoxyribonucleotide)m = (deoxyribonucleotide)n+m + AMP + diphosphate.. In terms of biological role, DNA ligase that seals nicks in double-stranded DNA during DNA replication, DNA recombination and DNA repair. This is DNA ligase from Methanosphaerula palustris (strain ATCC BAA-1556 / DSM 19958 / E1-9c).